Here is a 315-residue protein sequence, read N- to C-terminus: p-hydroxyphenylacetate 3-hydroxylase, reductase component (315 aa).

The protein belongs to the non-flavoprotein flavin reductase family. As to quaternary structure, homodimer. The p-hydroxyphenylacetate 3-hydroxylase (HpaH) is composed of an oxygenase component C2 and a reductase component C1.

The catalysed reaction is a reduced flavin + NAD(+) = an oxidized flavin + NADH + 2 H(+). It participates in aromatic compound metabolism; 4-hydroxyphenylacetate degradation; pyruvate and succinate semialdehyde from 4-hydroxyphenylacetate: step 1/7. Its activity is regulated as follows. Flavin concentrations greater than 15 uM do not inhibit the NADH oxidation activity of the reductase component C1 but do affect the hydroxylation activity of the C1-C2 complex. Maximal reductase activity is achieved only upon HPA binding to the reductase component C1 before interaction with NADH. HPA stimulates the rates of both the reduction of FMN and release of reduced FMN from the reductase component. In terms of biological role, reductase component of a two-component system that supplies reduced FMN (FMNH2) to the oxygenase component to catalyze the hydroxylation of 4-hydroxyphenylacetic acid, leading to the production of 3,4-dihydroxyphenylacetate (3,4-DHPA). Catalyzes the reduction of free flavins (FMN, FAD and riboflavin) by NADH. Subsequently, the reduced flavins diffuse to the oxygenase component C2. This is p-hydroxyphenylacetate 3-hydroxylase, reductase component from Acinetobacter baumannii.